A 164-amino-acid polypeptide reads, in one-letter code: Leucine-rich single-pass membrane protein 2 (164 aa).

Residues 97–117 traverse the membrane as a helical segment; it reads GFLLLLALLVLTCLVLALLAV.

Its subcellular location is the membrane. This is Leucine-rich single-pass membrane protein 2 (LSMEM2) from Homo sapiens (Human).